Reading from the N-terminus, the 688-residue chain is Glycine--tRNA ligase beta subunit (688 aa).

It belongs to the class-II aminoacyl-tRNA synthetase family. Tetramer of two alpha and two beta subunits.

Its subcellular location is the cytoplasm. It carries out the reaction tRNA(Gly) + glycine + ATP = glycyl-tRNA(Gly) + AMP + diphosphate. This chain is Glycine--tRNA ligase beta subunit, found in Aliivibrio salmonicida (strain LFI1238) (Vibrio salmonicida (strain LFI1238)).